Consider the following 402-residue polypeptide: Nodulation protein E (402 aa).

Positions 2–401 (DRRVVITGMG…GTNAVLAFKQ (400 aa)) constitute a Ketosynthase family 3 (KS3) domain. Active-site for beta-ketoacyl synthase activity residues include Cys162, His294, and His331. Residues 329–348 (HAHCIGAASALEMIACVMAI) traverse the membrane as a helical segment.

The protein belongs to the thiolase-like superfamily. Beta-ketoacyl-ACP synthases family.

Its subcellular location is the cell inner membrane. Its function is as follows. Proposed to synthesize NOD factor fatty acyl chain. Involved in the synthesis of a highly unsaturated fatty acid moiety, which forms part of a lipo-oligosaccharide that is responsible for host specificity. The sequence is that of Nodulation protein E (nodE) from Rhizobium meliloti (strain 1021) (Ensifer meliloti).